The sequence spans 60 residues: Snake venom metalloproteinase bothrojaractivase (60 aa).

The Peptidase M12B domain occupies 1–60 (RYIELAVVADHGMFTKYRVHELVNTVNGFFRSKQDLIKVQKDKTLTSFGEWRERDLLPRI). Residue Glu4 participates in Ca(2+) binding.

This sequence belongs to the venom metalloproteinase (M12B) family. P-I subfamily. As to quaternary structure, monomer. It depends on Zn(2+) as a cofactor. As to expression, expressed by the venom gland.

Its subcellular location is the secreted. Completely inhibited by EDTA and EGTA. Partially inhibited by serine proteinase inhibitors PMSF and benzamidine. Not inhibited by cysteine proteinase inhibitors mercury ions and E-64. Is active without cofactors, although the presence of low concentrations of calcium and zinc ions enhanced its ability to convert prothrombin (F2) into active thrombin. Prothrombin (F2) activator that is cofactor-independent. Also has fibrinolytic and fibrinogenolytic activity. It degrades the Aalpha-chain and more slowly the Bbeta-chain of fibrin and fibrinogen, while the gamma-chain is only partially and slowly affected. A dose-dependent procoagulant activity is shown in human plasma. In Bothrops jararaca (Jararaca), this protein is Snake venom metalloproteinase bothrojaractivase.